The chain runs to 878 residues: Valine--tRNA ligase (878 aa).

The 'HIGH' region signature appears at 43-53; sequence PYPTGRLHLGH. The 'KMSKS' region signature appears at 527–531; the sequence is KMSKS. Lysine 530 is a binding site for ATP.

The protein belongs to the class-I aminoacyl-tRNA synthetase family. ValS type 2 subfamily.

The protein localises to the cytoplasm. It carries out the reaction tRNA(Val) + L-valine + ATP = L-valyl-tRNA(Val) + AMP + diphosphate. Functionally, catalyzes the attachment of valine to tRNA(Val). As ValRS can inadvertently accommodate and process structurally similar amino acids such as threonine, to avoid such errors, it has a 'posttransfer' editing activity that hydrolyzes mischarged Thr-tRNA(Val) in a tRNA-dependent manner. The sequence is that of Valine--tRNA ligase from Methanocaldococcus jannaschii (strain ATCC 43067 / DSM 2661 / JAL-1 / JCM 10045 / NBRC 100440) (Methanococcus jannaschii).